Reading from the N-terminus, the 185-residue chain is uncharacterized protein (185 aa).

The first 29 residues, 1–29 (MKNQEIIEVKSKMFLRIWAFVGSAGMGLA), serve as a signal peptide directing secretion. The N-palmitoyl cysteine moiety is linked to residue cysteine 30. Cysteine 30 is lipidated: S-diacylglycerol cysteine. The chain crosses the membrane as a helical span at residues 45–67 (YLLAIPAGFLFTLFCLYLFIIFF).

The protein to B.subtilis YfjE.

The protein resides in the cell membrane. This is an uncharacterized protein from Bacillus subtilis (strain 168).